The primary structure comprises 473 residues: MDPSSKPLREIPGSYGIPFFQPIKDRLEYFYGTGGRDEYFRSRMQKYQSTVFRANMPPGPFVSSNPKVIVLLDAKSFPILFDVSKVEKKDLFTGTYMPSTKLTGGYRVLSYLDPSEPRHAQLKNLLFFMLKNSSNRVIPQFETTYTELFEGLEAELAKNGKAAFNDVGEQAAFRFLGRAYFNSNPEETKLGTSAPTLISSWVLFNLAPTLDLGLPWFLQEPLLHTFRLPAFLIKSTYNKLYDYFQSVATPVMEQAEKLGVPKDEAVHNILFAVCFNTFGGVKILFPNTLKWIGLAGENLHTQLAEEIRGAIKSYGDGNVTLEAIEQMPLTKSVVYESLRIEPPVPPQYGKAKSNFTIESHDATFEVKKGEMLFGYQPFATKDPKVFDRPEEYVPDRFVGDGEALLKYVWWSNGPETESPTVENKQCAGKDFVVLITRLFVIELFRRYDSFEIELGESPLGAAVTLTFLKRASI.

3 residues coordinate heme b: K88, H119, and K123. (13S)-hydroperoxy-(9Z,11E)-octadecadienoate is bound by residues S199 and K282. K424 and C426 together coordinate heme b.

Belongs to the cytochrome P450 family. Requires heme b as cofactor.

The catalysed reaction is (13S)-hydroperoxy-(9Z,11E,15Z)-octadecatrienoate = (9Z,13S,15Z)-12,13-epoxyoctadeca-9,11,15-trienoate + H2O. It carries out the reaction (13S)-hydroperoxy-(9Z,11E)-octadecadienoate = (9Z,13S)-12,13-epoxyoctadeca-9,11-dienoate + H2O. It participates in lipid metabolism; oxylipin biosynthesis. Its function is as follows. Cytochrome P450 enzyme involved in the biosynthesis of oxylipin jasmonates, important phytohormones acting as growth regulators and signaling molecules for plant defense. Functions as an allene oxide synthase that converts hydroperoxy fatty acids to unstable allene epoxides. Catalyzes the dehydration of 13-HPOTE ((13S)-hydroperoxy-(9Z,11E,15Z)-octadecatrienoate). Also catalyzes the dehydration of 13-HPODE ((13S)-hydroperoxy-(9Z,11E)-octadecadienoate). This is Allene oxide synthase CYP74A2 from Parthenium argentatum (Guayule rubber plant).